The sequence spans 398 residues: MMTASQRYDTKIHRRVTRTVMVGDVPIGSEHPIAVQSMINEDTLDIDGSVAGILRLADAGCEIVRVTTPSIGHAKAMGKIRSALRAQGCKIPLVADVHHNGTRIALEVAKHVDKVRINPGLFVFDKPDPDRQEFSKEEFDAIGDRIKETFAPLVQVLKEQNKALRIGVNHGSLAERMLFTYGDTPQGMVESAMEFVRICDSLDFHNIVISMKASRAPVMLAAYRLMADTMDREGFNYPLHLGVTEAGDGDYGRIKSTAGIATLLAEGLGDTLRVSLTEAPEKEIPVCFSILQALGIRKTMVEYVACPSCGRTLFNLEEVLHQVRNATCHLTGLDIAVMGCIVNGPGEMADADYGYVGKGPGVIALYRNRDEIRKVPESEGVEALVQLIKDDGRWVEPD.

[4Fe-4S] cluster contacts are provided by Cys-306, Cys-309, Cys-340, and Glu-347.

The protein belongs to the IspG family. [4Fe-4S] cluster is required as a cofactor.

It catalyses the reaction (2E)-4-hydroxy-3-methylbut-2-enyl diphosphate + 2 oxidized [2Fe-2S]-[ferredoxin] + H2O = 2-C-methyl-D-erythritol 2,4-cyclic diphosphate + 2 reduced [2Fe-2S]-[ferredoxin] + H(+). The protein operates within isoprenoid biosynthesis; isopentenyl diphosphate biosynthesis via DXP pathway; isopentenyl diphosphate from 1-deoxy-D-xylulose 5-phosphate: step 5/6. Its function is as follows. Converts 2C-methyl-D-erythritol 2,4-cyclodiphosphate (ME-2,4cPP) into 1-hydroxy-2-methyl-2-(E)-butenyl 4-diphosphate. The polypeptide is 4-hydroxy-3-methylbut-2-en-1-yl diphosphate synthase (ferredoxin) (Synechococcus sp. (strain CC9311)).